We begin with the raw amino-acid sequence, 380 residues long: MNDPMTTPWGAYALARFPEDPRDRLRAWDASDAYLLRHLAASGTPLSGSVVVLGDRWGALTTALAAHRPTQITDSFLAREATRENLGRAGVDPSSVRLLTTRDTPPERIDVLLVRVPKSLALLEDQLHRLAPGVHEGTVVVGAGMVKEIHTSTLKLFERILGPTRTSLAEQKARLIFCTPDPGLVRDPNPWPYRYRLPDGVGPLSGRPVTNHAGVFCADRLDIGTRFFLRHLPRVSGAERVVDLGCGNGVVGTAVALTEPEAEVLFVDESYQAVASARETFRANADGTAEFLVGDGLSGVPAASVDVVLNNPPFHSHQATTDATAWRMFTGAKRALRPGGELWVIGNRHLGYHLKLRRLFGNSELVASDAKFVVLRAVKK.

The protein belongs to the methyltransferase superfamily. RlmG family.

It localises to the cytoplasm. The catalysed reaction is guanosine(1835) in 23S rRNA + S-adenosyl-L-methionine = N(2)-methylguanosine(1835) in 23S rRNA + S-adenosyl-L-homocysteine + H(+). Functionally, specifically methylates the guanine in position 1835 (m2G1835) of 23S rRNA. The protein is Ribosomal RNA large subunit methyltransferase G of Streptomyces avermitilis (strain ATCC 31267 / DSM 46492 / JCM 5070 / NBRC 14893 / NCIMB 12804 / NRRL 8165 / MA-4680).